Consider the following 21-residue polypeptide: Large ribosomal subunit protein uL10 (21 aa).

It belongs to the universal ribosomal protein uL10 family. Part of the ribosomal stalk of the 50S ribosomal subunit. The N-terminus interacts with L11 and the large rRNA to form the base of the stalk. The C-terminus forms an elongated spine to which L12 dimers bind in a sequential fashion forming a multimeric L10(L12)X complex.

In terms of biological role, forms part of the ribosomal stalk, playing a central role in the interaction of the ribosome with GTP-bound translation factors. This is Large ribosomal subunit protein uL10 (rplJ) from Bacillus cereus.